The chain runs to 1407 residues: JmjC domain-containing histone demethylation protein 1 (1407 aa).

Disordered regions lie at residues 1 to 86 (MISA…SSTI) and 98 to 151 (PTFT…NAFS). Composition is skewed to basic and acidic residues over residues 55 to 67 (DHVRSTPTDKRPS) and 125 to 140 (PVERPAKRPRSERDES). A compositionally biased stretch (polar residues) spans 141–150 (SYTQHRSNAF). The PHD-type zinc-finger motif lies at 323-382 (QASCATCNLVRIPVDNEDQDVTWISCDGCKRWFHIVCAGFKNDRETRTVDKFICKTCRPI). One can recognise a JmjC domain in the interval 577–735 (VSQSKLGRLI…MQIKIAKIEK (159 aa)). A substrate-binding site is contributed by Thr-628. His-631 and Asp-633 together coordinate Fe cation. Residue Lys-648 participates in substrate binding. Position 703 (His-703) interacts with Fe cation. Disordered regions lie at residues 893–987 (KLSL…LGPK), 1004–1027 (KEENNGASGSQMTVSTSSLGHHTP), 1122–1183 (IKAQ…QDSV), and 1252–1389 (DEMD…SLRL). Composition is skewed to basic and acidic residues over residues 896-914 (LAEKRPAGRPSRRSERNAD) and 928-938 (LSERPAVDIQK). Residues 1008 to 1027 (NGASGSQMTVSTSSLGHHTP) show a composition bias toward polar residues. Over residues 1254–1264 (MDIHDQVDAGG) the composition is skewed to basic and acidic residues. Residues 1273-1284 (PSSGSRQSSRQP) are compositionally biased toward low complexity. Positions 1285-1296 (RQVERYMPEVHF) are enriched in basic and acidic residues. Low complexity predominate over residues 1297-1349 (AKTAKSTTTTPQTTRRSSFGSSGRKTTPGLSSGSKKSGSRPSSSHGKKSLSPS).

Belongs to the JHDM1 histone demethylase family. Fe(2+) is required as a cofactor.

The protein resides in the nucleus. The catalysed reaction is N(6),N(6)-dimethyl-L-lysyl(36)-[histone H3] + 2 2-oxoglutarate + 2 O2 = L-lysyl(36)-[histone H3] + 2 formaldehyde + 2 succinate + 2 CO2. Histone demethylase that specifically demethylates 'Lys-36' of histone H3, thereby playing a central role in histone code. The polypeptide is JmjC domain-containing histone demethylation protein 1 (jhd1) (Emericella nidulans (strain FGSC A4 / ATCC 38163 / CBS 112.46 / NRRL 194 / M139) (Aspergillus nidulans)).